The following is a 168-amino-acid chain: Crossover junction endodeoxyribonuclease RuvC (168 aa).

Residues aspartate 7, glutamate 67, and histidine 139 contribute to the active site. Residues aspartate 7, glutamate 67, and histidine 139 each coordinate Mg(2+).

Belongs to the RuvC family. As to quaternary structure, homodimer which binds Holliday junction (HJ) DNA. The HJ becomes 2-fold symmetrical on binding to RuvC with unstacked arms; it has a different conformation from HJ DNA in complex with RuvA. In the full resolvosome a probable DNA-RuvA(4)-RuvB(12)-RuvC(2) complex forms which resolves the HJ. The cofactor is Mg(2+).

It is found in the cytoplasm. It catalyses the reaction Endonucleolytic cleavage at a junction such as a reciprocal single-stranded crossover between two homologous DNA duplexes (Holliday junction).. Its function is as follows. The RuvA-RuvB-RuvC complex processes Holliday junction (HJ) DNA during genetic recombination and DNA repair. Endonuclease that resolves HJ intermediates. Cleaves cruciform DNA by making single-stranded nicks across the HJ at symmetrical positions within the homologous arms, yielding a 5'-phosphate and a 3'-hydroxyl group; requires a central core of homology in the junction. The consensus cleavage sequence is 5'-(A/T)TT(C/G)-3'. Cleavage occurs on the 3'-side of the TT dinucleotide at the point of strand exchange. HJ branch migration catalyzed by RuvA-RuvB allows RuvC to scan DNA until it finds its consensus sequence, where it cleaves and resolves the cruciform DNA. The sequence is that of Crossover junction endodeoxyribonuclease RuvC from Deinococcus geothermalis (strain DSM 11300 / CIP 105573 / AG-3a).